Here is a 506-residue protein sequence, read N- to C-terminus: Galactose/methyl galactoside import ATP-binding protein MglA (506 aa).

2 ABC transporter domains span residues 14–249 (LEMS…VGRS) and 264–506 (VILE…SLHL). Position 46-53 (46-53 (GENGAGKS)) interacts with ATP.

This sequence belongs to the ABC transporter superfamily. Galactose/methyl galactoside importer (TC 3.A.1.2.3) family. In terms of assembly, the complex is composed of one ATP-binding protein (MglA), two transmembrane proteins (MglC) and a solute-binding protein (MglB).

Its subcellular location is the cell inner membrane. It catalyses the reaction D-galactose(out) + ATP + H2O = D-galactose(in) + ADP + phosphate + H(+). It carries out the reaction methyl beta-D-galactoside(out) + ATP + H2O = methyl beta-D-galactoside(in) + ADP + phosphate + H(+). Its function is as follows. Part of the ABC transporter complex MglABC involved in galactose/methyl galactoside import. Responsible for energy coupling to the transport system. This chain is Galactose/methyl galactoside import ATP-binding protein MglA, found in Shigella boydii serotype 4 (strain Sb227).